A 412-amino-acid polypeptide reads, in one-letter code: Acetate kinase (412 aa).

Mg(2+) is bound at residue asparagine 10. Lysine 17 provides a ligand contact to ATP. A disordered region spans residues 40–61 (ETSRLAHTPSAGGGAEPRERTG). A substrate-binding site is contributed by arginine 95. Aspartate 152 serves as the catalytic Proton donor/acceptor. ATP-binding positions include 212 to 216 (HLGNG), 286 to 288 (DMR), and 334 to 338 (GVGEN). Residue glutamate 388 participates in Mg(2+) binding.

The protein belongs to the acetokinase family. Homodimer. Requires Mg(2+) as cofactor. The cofactor is Mn(2+).

The protein localises to the cytoplasm. The enzyme catalyses acetate + ATP = acetyl phosphate + ADP. It participates in metabolic intermediate biosynthesis; acetyl-CoA biosynthesis; acetyl-CoA from acetate: step 1/2. In terms of biological role, catalyzes the formation of acetyl phosphate from acetate and ATP. Can also catalyze the reverse reaction. This chain is Acetate kinase, found in Streptomyces griseus subsp. griseus (strain JCM 4626 / CBS 651.72 / NBRC 13350 / KCC S-0626 / ISP 5235).